Here is a 140-residue protein sequence, read N- to C-terminus: Gonadotropin subunit beta-2 (140 aa).

Positions 1-24 (MSVYPECTWLLFVCLCHLLVSAGG) are cleaved as a signal peptide. Intrachain disulfides connect Cys30/Cys78, Cys44/Cys93, Cys47/Cys131, Cys55/Cys109, Cys59/Cys111, and Cys114/Cys121. Asn34 carries N-linked (GlcNAc...) asparagine glycosylation.

This sequence belongs to the glycoprotein hormones subunit beta family. Heterodimer of an alpha and a beta chain.

The protein resides in the secreted. Its function is as follows. Involved in gametogenesis and steroidogenesis. The polypeptide is Gonadotropin subunit beta-2 (cgbb) (Anguilla anguilla (European freshwater eel)).